Reading from the N-terminus, the 352-residue chain is uncharacterized protein (352 aa).

To Synechocystis PCC 6803 slr0039.

This is an uncharacterized protein from Archaeoglobus fulgidus (strain ATCC 49558 / DSM 4304 / JCM 9628 / NBRC 100126 / VC-16).